Reading from the N-terminus, the 243-residue chain is Segregation and condensation protein A (243 aa).

It belongs to the ScpA family. As to quaternary structure, component of a cohesin-like complex composed of ScpA, ScpB and the Smc homodimer, in which ScpA and ScpB bind to the head domain of Smc. The presence of the three proteins is required for the association of the complex with DNA.

It localises to the cytoplasm. Its function is as follows. Participates in chromosomal partition during cell division. May act via the formation of a condensin-like complex containing Smc and ScpB that pull DNA away from mid-cell into both cell halves. This Halothermothrix orenii (strain H 168 / OCM 544 / DSM 9562) protein is Segregation and condensation protein A.